Consider the following 554-residue polypeptide: Nuclear division defective protein 1 (554 aa).

Disordered regions lie at residues 1 to 31 (MDRDISYQQNYTSTGATATSSRQPSTDNNAD) and 98 to 117 (IQQQQQQQQQQQQQQQALGS). Low complexity predominate over residues 98–113 (IQQQQQQQQQQQQQQQ). Thr-319 is subject to Phosphothreonine; by CDC28. 2 disordered regions span residues 410–475 (PTPN…GKKP) and 493–554 (SSSS…FNSQ). Polar residues predominate over residues 411–427 (TPNCNSLHSTTTGTSAL). Over residues 448–465 (SSSNTVSFKSKSGNNNSK) the composition is skewed to low complexity. Residues 466–475 (GRIKKNGKKP) are compositionally biased toward basic residues. Low complexity predominate over residues 493-513 (SSSSLSSSLNASSSAGNSNSN). The segment covering 515 to 524 (TKKRASKLKR) has biased composition (basic residues). Over residues 525 to 536 (SQSLLSDSGSKS) the composition is skewed to low complexity. Residues 539-554 (RKSCNSKSNGNLFNSQ) are compositionally biased toward polar residues.

As to quaternary structure, forms an activator complex with FKH2. Phosphorylation of Thr-319 by CDC28 is required for the interaction with FKH2 and recruitment to promoters.

Its subcellular location is the cytoplasm. It localises to the nucleus. In terms of biological role, transcription activator involved in G2/M transcription through its association with FKH2. This is Nuclear division defective protein 1 (NDD1) from Saccharomyces cerevisiae (strain ATCC 204508 / S288c) (Baker's yeast).